The sequence spans 994 residues: MKSSGSARATRRNAVSSSSAPAHAEPPARRAAKPARKLDGAAARPLAPTNAASAKPQGRTREDKDRPLFEDIRYLGRLLGDVVREQEGDAVFDVVETIRQTAVKFRREDDKAAAQTLEKMLRKLTPEQTVSVVRAFSYFSHLANIAEDRHHNRRRRIHALAGSAAQAGTVAYALDKLKQAGDASSKTIKQFFEGALIVPVLTAHPTEVQRKSILDAQHDIARLLAERDQPLTARELAHNEALLRARVTTLWQTRMLRDARLTVADEIENALSYYRATFLDELPALYADIEEALAEHGLRARVPAFFQMGSWIGGDRDGNPNVTAATLDEAISRQAAVIFEHYLEQVHKLGAELSVSNLLVGASDALKALAAASPDQSPHRVDEPYRRALIGVYTRLAASARVRLGEGTVPVRSAGRGAAPVRATPYADAEEFAADLRVLTDSLALHHGESLATPRLAPLMRAAEVFGFHLASIDLRQSSDIHEAVVAELLARGGVEADYAALPEADKLRVLLAALADPRPLRSPYLDYSDLAKSELGVLERAHAIRAQFGARAVRNYIISHTETVSDLVEVLLLQKETGLFEGTLGTPHANARNGLMVIPLFETIADLRNASDIMRAFFALPGVGELLAHQGHEQEVMLGYSDSNKDGGFLTSNWELYRAELALVDLFDERGIKLRLFHGRGGTVGRGGGPTYQAILSQPPGTVNGQIRLTEQGEVIASKFANPEIGRRNLETVVAATLEATLAPHSNAPKQLPAFEAAMQTLSDAAMASYRALVYETPGFTDYFFSSTPITEIAELNIGSRPASRKLQDPKNRKIEDLRAIPWGFSWGQCRLLLTGWYGFGSAVAAYLDGAPDAAERGKRVALLKKMNKTWPFFANLLSNMDMVLAKTDLAVASRYAQLVADKKLRKHVFERIVAEWHRTADALAEITGAHARLAANPLLARSIKNRFPYLDPLNHLQVELIKRHRAGDTNARLRRGIHLTINGIAAGLRNTG.

Residues 1-66 are disordered; sequence MKSSGSARAT…QGRTREDKDR (66 aa). 2 stretches are compositionally biased toward low complexity: residues 14-25 and 41-54; these read AVSSSSAPAHAE and AAARPLAPTNAASA. Residues histidine 204 and lysine 646 contribute to the active site.

Belongs to the PEPCase type 1 family. Mg(2+) is required as a cofactor.

It carries out the reaction oxaloacetate + phosphate = phosphoenolpyruvate + hydrogencarbonate. Its function is as follows. Forms oxaloacetate, a four-carbon dicarboxylic acid source for the tricarboxylic acid cycle. The sequence is that of Phosphoenolpyruvate carboxylase from Burkholderia mallei (strain NCTC 10247).